A 417-amino-acid polypeptide reads, in one-letter code: NADH-quinone oxidoreductase subunit D (417 aa).

Belongs to the complex I 49 kDa subunit family. NDH-1 is composed of 14 different subunits. Subunits NuoB, C, D, E, F, and G constitute the peripheral sector of the complex.

Its subcellular location is the cell inner membrane. It catalyses the reaction a quinone + NADH + 5 H(+)(in) = a quinol + NAD(+) + 4 H(+)(out). NDH-1 shuttles electrons from NADH, via FMN and iron-sulfur (Fe-S) centers, to quinones in the respiratory chain. The immediate electron acceptor for the enzyme in this species is believed to be ubiquinone. Couples the redox reaction to proton translocation (for every two electrons transferred, four hydrogen ions are translocated across the cytoplasmic membrane), and thus conserves the redox energy in a proton gradient. The protein is NADH-quinone oxidoreductase subunit D of Paraburkholderia phytofirmans (strain DSM 17436 / LMG 22146 / PsJN) (Burkholderia phytofirmans).